A 371-amino-acid chain; its full sequence is Transcriptional regulator of yeast form adherence 2 (371 aa).

The segment at 16–44 (RNPAVLCSFYSKIGACRHGEKCSKKHLKP) adopts a C3H1-type 1 zinc-finger fold. Over residues 94–107 (TVSQIDDSPHSNSG) the composition is skewed to polar residues. The tract at residues 94–194 (TVSQIDDSPH…NIEDAKLEDT (101 aa)) is disordered. A compositionally biased stretch (acidic residues) spans 115-124 (VETQEVETEN). The span at 132-194 (GDVKIDHNED…NIEDAKLEDT (63 aa)) shows a compositional bias: basic and acidic residues. The RRM domain occupies 192-279 (EDTEKDKLPE…KPVYSDLSPV (88 aa)). A C3H1-type 2 zinc finger spans residues 281-309 (DFNDACCEEYRDYHDCQRGAMCNYMHVRL). Residues 337-371 (ELPGDIRSSSSTNDDETNGNENGISSTMAVLEQLS) are disordered. Positions 355-371 (GNENGISSTMAVLEQLS) are enriched in polar residues.

Its subcellular location is the nucleus. Functionally, transcription factor required for yeast cell adherence to silicone substrate. In Candida albicans (strain SC5314 / ATCC MYA-2876) (Yeast), this protein is Transcriptional regulator of yeast form adherence 2 (TRY2).